Reading from the N-terminus, the 205-residue chain is Nascent polypeptide-associated complex subunit alpha-like protein (205 aa).

Disordered regions lie at residues 1 to 73 (MPSV…RKAM) and 137 to 166 (KAPNLSHVTMKPESSTAAQEDEDEVDDTGV). The segment covering 20–29 (EQQELEHSDE) has biased composition (basic and acidic residues). Positions 30–51 (PILEDDEDDDDEEDDNDEDDAQ) are enriched in acidic residues. The segment covering 56 to 66 (GEGKSKQSRSE) has biased composition (basic and acidic residues). Residues 63 to 128 (SRSEKKCRKA…AKIEDLSSQL (66 aa)) enclose the NAC-A/B domain. Over residues 155–165 (QEDEDEVDDTG) the composition is skewed to acidic residues. Residues 166-203 (VEPKDIELVMTQAGVSRTKAVKALKAADGDIVSAIMDL) enclose the UBA domain.

It belongs to the NAC-alpha family.

Functionally, may promote appropriate targeting of ribosome-nascent polypeptide complexes. The sequence is that of Nascent polypeptide-associated complex subunit alpha-like protein from Pinus taeda (Loblolly pine).